Reading from the N-terminus, the 409-residue chain is N-acetylglucosamine-6-phosphate deacetylase (409 aa).

Glutamate 143 lines the a divalent metal cation pocket. Alanine 154–histidine 155 contacts substrate. A divalent metal cation-binding residues include histidine 211 and histidine 232. Substrate contacts are provided by residues asparagine 235–alanine 236, arginine 243, and aspartate 269–histidine 272. Residue aspartate 294 is the Proton donor/acceptor of the active site. Substrate is bound at residue leucine 328–glycine 330.

The protein belongs to the metallo-dependent hydrolases superfamily. NagA family. It depends on a divalent metal cation as a cofactor.

The enzyme catalyses N-acetyl-D-glucosamine 6-phosphate + H2O = D-glucosamine 6-phosphate + acetate. Its pathway is amino-sugar metabolism; N-acetylneuraminate degradation. Its function is as follows. Hydrolyzes the N-glycolyl group from N-glycolylglucosamine 6-phosphate (GlcNGc-6-P) in the N-glycolylneuraminic acid (Neu5Gc) degradation pathway. This chain is N-acetylglucosamine-6-phosphate deacetylase (Amdhd2), found in Mus musculus (Mouse).